A 521-amino-acid polypeptide reads, in one-letter code: Glucose-6-phosphate isomerase (521 aa).

Glu327 functions as the Proton donor in the catalytic mechanism. Residues His358 and Lys486 contribute to the active site.

Belongs to the GPI family.

It localises to the cytoplasm. It carries out the reaction alpha-D-glucose 6-phosphate = beta-D-fructose 6-phosphate. It functions in the pathway carbohydrate biosynthesis; gluconeogenesis. The protein operates within carbohydrate degradation; glycolysis; D-glyceraldehyde 3-phosphate and glycerone phosphate from D-glucose: step 2/4. Functionally, catalyzes the reversible isomerization of glucose-6-phosphate to fructose-6-phosphate. This is Glucose-6-phosphate isomerase from Bordetella petrii (strain ATCC BAA-461 / DSM 12804 / CCUG 43448).